The sequence spans 232 residues: Large ribosomal subunit protein uL10c (232 aa).

The N-terminal 52 residues, 1-52 (MESTLFLSKPLPTTIKTTTHSLSSVYPNPFKPNNLTFPRTTHKHPTTTTITA), are a transit peptide targeting the chloroplast.

It belongs to the universal ribosomal protein uL10 family. Component of the chloroplast large ribosomal subunit (LSU). Mature 70S chloroplast ribosomes of higher plants consist of a small (30S) and a large (50S) subunit. The 30S small subunit contains 1 molecule of ribosomal RNA (16S rRNA) and 24 different proteins. The 50S large subunit contains 3 rRNA molecules (23S, 5S and 4.5S rRNA) and 33 different proteins.

Its subcellular location is the plastid. It is found in the chloroplast. Its function is as follows. Component of the chloroplast ribosome (chloro-ribosome), a dedicated translation machinery responsible for the synthesis of chloroplast genome-encoded proteins, including proteins of the transcription and translation machinery and components of the photosynthetic apparatus. In Spinacia oleracea (Spinach), this protein is Large ribosomal subunit protein uL10c (RPL10).